Consider the following 148-residue polypeptide: Ribonuclease P protein component (148 aa).

A disordered region spans residues 119–148 (PLPAAPGTMPPARAPRPSSLSPTEPDPRSD).

This sequence belongs to the RnpA family. Consists of a catalytic RNA component (M1 or rnpB) and a protein subunit.

It catalyses the reaction Endonucleolytic cleavage of RNA, removing 5'-extranucleotides from tRNA precursor.. RNaseP catalyzes the removal of the 5'-leader sequence from pre-tRNA to produce the mature 5'-terminus. It can also cleave other RNA substrates such as 4.5S RNA. The protein component plays an auxiliary but essential role in vivo by binding to the 5'-leader sequence and broadening the substrate specificity of the ribozyme. This Xanthomonas campestris pv. campestris (strain 8004) protein is Ribonuclease P protein component.